We begin with the raw amino-acid sequence, 556 residues long: Glycosyl hydrolase 5 family protein (556 aa).

Residues 1 to 28 (MTSAGVAPTALRLLTALLLLLVAAPSHS) form the signal peptide. Residues Asn102 and Asn113 are each glycosylated (N-linked (GlcNAc...) asparagine). The Proton donor/acceptor role is filled by Glu208. Residues Asn212, Asn290, and Asn307 are each glycosylated (N-linked (GlcNAc...) asparagine). Residue Glu473 is the Nucleophile of the active site. 2 N-linked (GlcNAc...) asparagine glycosylation sites follow: Asn474 and Asn479.

Belongs to the glycosyl hydrolase 5 (cellulase A) family. In terms of processing, glycosylated.

May have glycosyl hydrolase activity. The polypeptide is Glycosyl hydrolase 5 family protein (Chamaecyparis obtusa (Hinoki false-cypress)).